A 404-amino-acid polypeptide reads, in one-letter code: Cysteine desulfurase IscS (404 aa).

Pyridoxal 5'-phosphate contacts are provided by residues 75–76, Asn155, Gln183, and 203–205; these read AT and SGH. At Lys206 the chain carries N6-(pyridoxal phosphate)lysine. A pyridoxal 5'-phosphate-binding site is contributed by Thr243. The Cysteine persulfide intermediate role is filled by Cys328. Position 328 (Cys328) interacts with [2Fe-2S] cluster.

The protein belongs to the class-V pyridoxal-phosphate-dependent aminotransferase family. NifS/IscS subfamily. Homodimer. Forms a heterotetramer with IscU, interacts with other sulfur acceptors. It depends on pyridoxal 5'-phosphate as a cofactor.

Its subcellular location is the cytoplasm. It carries out the reaction (sulfur carrier)-H + L-cysteine = (sulfur carrier)-SH + L-alanine. The protein operates within cofactor biosynthesis; iron-sulfur cluster biosynthesis. Its function is as follows. Master enzyme that delivers sulfur to a number of partners involved in Fe-S cluster assembly, tRNA modification or cofactor biosynthesis. Catalyzes the removal of elemental sulfur atoms from cysteine to produce alanine. Functions as a sulfur delivery protein for Fe-S cluster synthesis onto IscU, an Fe-S scaffold assembly protein, as well as other S acceptor proteins. The polypeptide is Cysteine desulfurase IscS (Pectobacterium atrosepticum (strain SCRI 1043 / ATCC BAA-672) (Erwinia carotovora subsp. atroseptica)).